The sequence spans 126 residues: Holo-[acyl-carrier-protein] synthase (126 aa).

The Mg(2+) site is built by Asp-9 and Glu-57.

This sequence belongs to the P-Pant transferase superfamily. AcpS family. Mg(2+) serves as cofactor.

The protein localises to the cytoplasm. It carries out the reaction apo-[ACP] + CoA = holo-[ACP] + adenosine 3',5'-bisphosphate + H(+). Transfers the 4'-phosphopantetheine moiety from coenzyme A to a Ser of acyl-carrier-protein. The polypeptide is Holo-[acyl-carrier-protein] synthase (Pseudoalteromonas atlantica (strain T6c / ATCC BAA-1087)).